Reading from the N-terminus, the 403-residue chain is Formate-dependent phosphoribosylglycinamide formyltransferase (403 aa).

Residues 27 to 28 (EL) and E87 each bind N(1)-(5-phospho-beta-D-ribosyl)glycinamide. ATP is bound by residues R120, K161, 166–171 (SSGKGQ), 201–204 (EGFV), and E209. The ATP-grasp domain maps to 125-319 (RLAAEELGLP…EFELHARAIL (195 aa)). Residues E278 and E290 each contribute to the Mg(2+) site. N(1)-(5-phospho-beta-D-ribosyl)glycinamide-binding positions include D297, K366, and 373 to 374 (RR). The segment at 382-403 (GPDVETARSRAREAASRVEPVA) is disordered. A compositionally biased stretch (basic and acidic residues) spans 386–397 (ETARSRAREAAS).

The protein belongs to the PurK/PurT family. In terms of assembly, homodimer.

The enzyme catalyses N(1)-(5-phospho-beta-D-ribosyl)glycinamide + formate + ATP = N(2)-formyl-N(1)-(5-phospho-beta-D-ribosyl)glycinamide + ADP + phosphate + H(+). Its pathway is purine metabolism; IMP biosynthesis via de novo pathway; N(2)-formyl-N(1)-(5-phospho-D-ribosyl)glycinamide from N(1)-(5-phospho-D-ribosyl)glycinamide (formate route): step 1/1. Functionally, involved in the de novo purine biosynthesis. Catalyzes the transfer of formate to 5-phospho-ribosyl-glycinamide (GAR), producing 5-phospho-ribosyl-N-formylglycinamide (FGAR). Formate is provided by PurU via hydrolysis of 10-formyl-tetrahydrofolate. In Rhodococcus jostii (strain RHA1), this protein is Formate-dependent phosphoribosylglycinamide formyltransferase.